The primary structure comprises 166 residues: Disulfide bond formation protein B (166 aa).

Topologically, residues 1–11 (MCNKLFAGRRG) are cytoplasmic. Residues 12 to 28 (YFLGFVASFGLVGLALF) form a helical membrane-spanning segment. Over 29–46 (LQQKYNLEPCPLCISQRI) the chain is Periplasmic. A disulfide bond links C38 and C41. The chain crosses the membrane as a helical span at residues 47 to 63 (AFMALGILFLLAALHNP). The Cytoplasmic portion of the chain corresponds to 64–69 (GRVGRK). A helical transmembrane segment spans residues 70-87 (VYGLLHVIAAATGIGIAA). The Periplasmic segment spans residues 88-144 (RHIWIQANPDKVMAECGAGFDYIMETFPLKKALDLIFKGTGECSAIDWTLFGLTIPQ). An intrachain disulfide couples C103 to C130. Residues 145 to 163 (LSLIAFVGLGLFAVLLAFH) traverse the membrane as a helical segment. The Cytoplasmic segment spans residues 164–166 (KKA).

This sequence belongs to the DsbB family.

It is found in the cell inner membrane. In terms of biological role, required for disulfide bond formation in some periplasmic proteins. Acts by oxidizing the DsbA protein. The polypeptide is Disulfide bond formation protein B (Methylobacillus flagellatus (strain ATCC 51484 / DSM 6875 / VKM B-1610 / KT)).